Here is a 372-residue protein sequence, read N- to C-terminus: Glutamate 5-kinase (372 aa).

Lysine 14 is an ATP binding site. Substrate-binding residues include serine 54, aspartate 141, and asparagine 153. ATP contacts are provided by residues 173 to 174 (TD) and 215 to 221 (TGGMATK). The PUA domain maps to 280–358 (RGQVVLDTGA…DNIEEILGYD (79 aa)).

This sequence belongs to the glutamate 5-kinase family.

It is found in the cytoplasm. The catalysed reaction is L-glutamate + ATP = L-glutamyl 5-phosphate + ADP. Its pathway is amino-acid biosynthesis; L-proline biosynthesis; L-glutamate 5-semialdehyde from L-glutamate: step 1/2. Catalyzes the transfer of a phosphate group to glutamate to form L-glutamate 5-phosphate. This Shewanella halifaxensis (strain HAW-EB4) protein is Glutamate 5-kinase.